Reading from the N-terminus, the 188-residue chain is dCTP deaminase (188 aa).

DCTP is bound by residues 111–116, 135–137, Gln156, Tyr170, and Gln180; these read KSTYAR and TLE. The Proton donor/acceptor role is filled by Glu137.

The protein belongs to the dCTP deaminase family. As to quaternary structure, homotrimer.

The catalysed reaction is dCTP + H2O + H(+) = dUTP + NH4(+). The protein operates within pyrimidine metabolism; dUMP biosynthesis; dUMP from dCTP (dUTP route): step 1/2. Functionally, catalyzes the deamination of dCTP to dUTP. This chain is dCTP deaminase, found in Francisella tularensis subsp. tularensis (strain FSC 198).